The chain runs to 478 residues: UDP-N-acetylmuramate--L-alanine ligase (478 aa).

120-126 lines the ATP pocket; it reads GSHGKTT.

It belongs to the MurCDEF family.

The protein resides in the cytoplasm. It catalyses the reaction UDP-N-acetyl-alpha-D-muramate + L-alanine + ATP = UDP-N-acetyl-alpha-D-muramoyl-L-alanine + ADP + phosphate + H(+). Its pathway is cell wall biogenesis; peptidoglycan biosynthesis. Functionally, cell wall formation. This chain is UDP-N-acetylmuramate--L-alanine ligase, found in Rickettsia felis (strain ATCC VR-1525 / URRWXCal2) (Rickettsia azadi).